Reading from the N-terminus, the 188-residue chain is Phosphoribosylglycinamide formyltransferase (188 aa).

N(1)-(5-phospho-beta-D-ribosyl)glycinamide is bound at residue 12 to 14; the sequence is GSN. Residues lysine 66, 91–94, and asparagine 108 each bind (6R)-10-formyltetrahydrofolate; that span reads MRLV. Histidine 110 serves as the catalytic Proton donor.

Belongs to the GART family.

It catalyses the reaction N(1)-(5-phospho-beta-D-ribosyl)glycinamide + (6R)-10-formyltetrahydrofolate = N(2)-formyl-N(1)-(5-phospho-beta-D-ribosyl)glycinamide + (6S)-5,6,7,8-tetrahydrofolate + H(+). Its pathway is purine metabolism; IMP biosynthesis via de novo pathway; N(2)-formyl-N(1)-(5-phospho-D-ribosyl)glycinamide from N(1)-(5-phospho-D-ribosyl)glycinamide (10-formyl THF route): step 1/1. Functionally, catalyzes the transfer of a formyl group from 10-formyltetrahydrofolate to 5-phospho-ribosyl-glycinamide (GAR), producing 5-phospho-ribosyl-N-formylglycinamide (FGAR) and tetrahydrofolate. In Staphylococcus epidermidis (strain ATCC 35984 / DSM 28319 / BCRC 17069 / CCUG 31568 / BM 3577 / RP62A), this protein is Phosphoribosylglycinamide formyltransferase.